We begin with the raw amino-acid sequence, 362 residues long: Phosphoserine aminotransferase (362 aa).

L-glutamate contacts are provided by Ser-9 and Arg-42. Residues 76 to 77 (GR), Trp-102, Thr-153, Asp-174, and Gln-197 each bind pyridoxal 5'-phosphate. The residue at position 198 (Lys-198) is an N6-(pyridoxal phosphate)lysine. Pyridoxal 5'-phosphate is bound at residue 239–240 (NT).

This sequence belongs to the class-V pyridoxal-phosphate-dependent aminotransferase family. SerC subfamily. Homodimer. Requires pyridoxal 5'-phosphate as cofactor.

Its subcellular location is the cytoplasm. The catalysed reaction is O-phospho-L-serine + 2-oxoglutarate = 3-phosphooxypyruvate + L-glutamate. It catalyses the reaction 4-(phosphooxy)-L-threonine + 2-oxoglutarate = (R)-3-hydroxy-2-oxo-4-phosphooxybutanoate + L-glutamate. Its pathway is amino-acid biosynthesis; L-serine biosynthesis; L-serine from 3-phospho-D-glycerate: step 2/3. The protein operates within cofactor biosynthesis; pyridoxine 5'-phosphate biosynthesis; pyridoxine 5'-phosphate from D-erythrose 4-phosphate: step 3/5. Its function is as follows. Catalyzes the reversible conversion of 3-phosphohydroxypyruvate to phosphoserine and of 3-hydroxy-2-oxo-4-phosphonooxybutanoate to phosphohydroxythreonine. The chain is Phosphoserine aminotransferase from Escherichia coli O157:H7.